Reading from the N-terminus, the 393-residue chain is NAD(P)H-quinone oxidoreductase subunit H, chloroplastic (393 aa).

Belongs to the complex I 49 kDa subunit family. As to quaternary structure, NDH is composed of at least 16 different subunits, 5 of which are encoded in the nucleus.

The protein resides in the plastid. The protein localises to the chloroplast thylakoid membrane. It catalyses the reaction a plastoquinone + NADH + (n+1) H(+)(in) = a plastoquinol + NAD(+) + n H(+)(out). The catalysed reaction is a plastoquinone + NADPH + (n+1) H(+)(in) = a plastoquinol + NADP(+) + n H(+)(out). Its function is as follows. NDH shuttles electrons from NAD(P)H:plastoquinone, via FMN and iron-sulfur (Fe-S) centers, to quinones in the photosynthetic chain and possibly in a chloroplast respiratory chain. The immediate electron acceptor for the enzyme in this species is believed to be plastoquinone. Couples the redox reaction to proton translocation, and thus conserves the redox energy in a proton gradient. This is NAD(P)H-quinone oxidoreductase subunit H, chloroplastic from Phaseolus vulgaris (Kidney bean).